The chain runs to 635 residues: 1-deoxy-D-xylulose-5-phosphate synthase (635 aa).

Residues His76 and 117-119 contribute to the thiamine diphosphate site; that span reads GHS. Asp148 serves as a coordination point for Mg(2+). Residues 149 to 150, Asn177, Tyr294, and Glu379 each bind thiamine diphosphate; that span reads GA. Mg(2+) is bound at residue Asn177.

Belongs to the transketolase family. DXPS subfamily. As to quaternary structure, homodimer. Mg(2+) serves as cofactor. Requires thiamine diphosphate as cofactor.

It carries out the reaction D-glyceraldehyde 3-phosphate + pyruvate + H(+) = 1-deoxy-D-xylulose 5-phosphate + CO2. It functions in the pathway metabolic intermediate biosynthesis; 1-deoxy-D-xylulose 5-phosphate biosynthesis; 1-deoxy-D-xylulose 5-phosphate from D-glyceraldehyde 3-phosphate and pyruvate: step 1/1. Its function is as follows. Catalyzes the acyloin condensation reaction between C atoms 2 and 3 of pyruvate and glyceraldehyde 3-phosphate to yield 1-deoxy-D-xylulose-5-phosphate (DXP). The polypeptide is 1-deoxy-D-xylulose-5-phosphate synthase (Neisseria meningitidis serogroup C (strain 053442)).